Here is a 192-residue protein sequence, read N- to C-terminus: Pyridoxal 5'-phosphate synthase subunit PdxT (192 aa).

An L-glutamine-binding site is contributed by 46-48 (GES). Cys-76 (nucleophile) is an active-site residue. Residues Arg-103 and 131–132 (IR) contribute to the L-glutamine site. Residues His-167 and Glu-169 each act as charge relay system in the active site.

The protein belongs to the glutaminase PdxT/SNO family. In terms of assembly, in the presence of PdxS, forms a dodecamer of heterodimers. Only shows activity in the heterodimer.

It catalyses the reaction aldehydo-D-ribose 5-phosphate + D-glyceraldehyde 3-phosphate + L-glutamine = pyridoxal 5'-phosphate + L-glutamate + phosphate + 3 H2O + H(+). The enzyme catalyses L-glutamine + H2O = L-glutamate + NH4(+). It functions in the pathway cofactor biosynthesis; pyridoxal 5'-phosphate biosynthesis. Its function is as follows. Catalyzes the hydrolysis of glutamine to glutamate and ammonia as part of the biosynthesis of pyridoxal 5'-phosphate. The resulting ammonia molecule is channeled to the active site of PdxS. The sequence is that of Pyridoxal 5'-phosphate synthase subunit PdxT from Koribacter versatilis (strain Ellin345).